The primary structure comprises 218 residues: Cytochrome b6 (218 aa).

A helical membrane pass occupies residues 35–55 (IFYCLGGITLVCFLIQFATGF). C38 contacts heme c. The heme b site is built by H89 and H103. Transmembrane regions (helical) follow at residues 93-113 (ASMM…TGGF), 119-139 (LTWV…VTGY), and 189-209 (LHTF…FLMI). Heme b is bound by residues H190 and H205.

Belongs to the cytochrome b family. PetB subfamily. As to quaternary structure, the 4 large subunits of the cytochrome b6-f complex are cytochrome b6, subunit IV (17 kDa polypeptide, PetD), cytochrome f and the Rieske protein, while the 4 small subunits are PetG, PetL, PetM and PetN. The complex functions as a dimer. Heme b serves as cofactor. Requires heme c as cofactor.

The protein localises to the cellular thylakoid membrane. Component of the cytochrome b6-f complex, which mediates electron transfer between photosystem II (PSII) and photosystem I (PSI), cyclic electron flow around PSI, and state transitions. This chain is Cytochrome b6, found in Prochlorococcus marinus (strain MIT 9515).